A 370-amino-acid chain; its full sequence is MKTKLILLYGGKSAEHEVSLQTAFSVINALDLEKFEAEPIYITNEGEWVQGPLLTGKLDFVEQLRFSATNTVKLAATESEKSEGEAISPAVLEADDQETVVFPLLHGPNGEDGTVQGLFEVLNIPYVGNGVLASSAAMDKIVMKKIFADAGIPQVPAVAVRLIDWKNYQEEMVSEMEEVLTYPVFVKPANLGSSVGISKATNKKELEDAMTEAFLYDRRVVVEQGVVAREIEMGVLGNDTPVCSVPGEILPEGAVATFYDYKAKYQDNNTALIIPTEVDPEILEQMKEYAVQAFLGLDASGLVRADFFLTDDNQLFLNEVNTMPGFTPYSMYPLLWQETGLPYSALIERLVDLAKERHAAKNALKYKLED.

The ATP-grasp domain maps to Lys-144 to Asp-352. An ATP-binding site is contributed by Glu-177–Glu-232. Mg(2+) is bound by residues Asp-306, Glu-319, and Asn-321.

It belongs to the D-alanine--D-alanine ligase family. It depends on Mg(2+) as a cofactor. The cofactor is Mn(2+).

The protein localises to the cytoplasm. The catalysed reaction is 2 D-alanine + ATP = D-alanyl-D-alanine + ADP + phosphate + H(+). It participates in cell wall biogenesis; peptidoglycan biosynthesis. Its function is as follows. Cell wall formation. This Listeria welshimeri serovar 6b (strain ATCC 35897 / DSM 20650 / CCUG 15529 / CIP 8149 / NCTC 11857 / SLCC 5334 / V8) protein is D-alanine--D-alanine ligase.